The chain runs to 70 residues: Large ribosomal subunit protein bL31 (70 aa).

Residues Cys-16, Cys-18, Cys-37, and Cys-40 each contribute to the Zn(2+) site.

It belongs to the bacterial ribosomal protein bL31 family. Type A subfamily. Part of the 50S ribosomal subunit. The cofactor is Zn(2+).

Its function is as follows. Binds the 23S rRNA. The polypeptide is Large ribosomal subunit protein bL31 (Haemophilus ducreyi (strain 35000HP / ATCC 700724)).